The sequence spans 324 residues: Adipolin (324 aa).

The first 24 residues, 1–24 (MRCWVWLLVAIVLCQQLSVVRVLA), serve as a signal peptide directing secretion. 2 disordered regions span residues 28-66 (ERKK…DPGL) and 83-121 (GANS…MPGA). Residues 40 to 49 (EPFNVSLSNS) show a composition bias toward polar residues. Residue Asn43 is glycosylated (N-linked (GlcNAc...) asparagine). Basic and acidic residues predominate over residues 50–60 (EELHETDKLSE). Residues 86–98 (SKKKCKGKDKKLR) show a composition bias toward basic residues. Residues 103-118 (PPGPPGPQGPPGPPGM) show a composition bias toward pro residues. Residues 169–324 (YRRVDEGFHC…SDFMGILMGL (156 aa)) form the C1q domain.

Belongs to the adipolin/erythroferrone family. In terms of assembly, homomultimer; disulfide-linked.

The protein localises to the secreted. Functionally, insulin-sensitizing adipocyte-secreted protein (adipokine) that regulates glucose metabolism in liver and adipose tissue. The polypeptide is Adipolin (c1qtnf12) (Xenopus tropicalis (Western clawed frog)).